The sequence spans 151 residues: SsrA-binding protein (151 aa).

It belongs to the SmpB family.

The protein resides in the cytoplasm. Its function is as follows. Required for rescue of stalled ribosomes mediated by trans-translation. Binds to transfer-messenger RNA (tmRNA), required for stable association of tmRNA with ribosomes. tmRNA and SmpB together mimic tRNA shape, replacing the anticodon stem-loop with SmpB. tmRNA is encoded by the ssrA gene; the 2 termini fold to resemble tRNA(Ala) and it encodes a 'tag peptide', a short internal open reading frame. During trans-translation Ala-aminoacylated tmRNA acts like a tRNA, entering the A-site of stalled ribosomes, displacing the stalled mRNA. The ribosome then switches to translate the ORF on the tmRNA; the nascent peptide is terminated with the 'tag peptide' encoded by the tmRNA and targeted for degradation. The ribosome is freed to recommence translation, which seems to be the essential function of trans-translation. The chain is SsrA-binding protein from Chlamydia muridarum (strain MoPn / Nigg).